The following is a 202-amino-acid chain: GTP-binding protein rho1 (202 aa).

GTP is bound at residue 13–20 (GDGACGKT). Residues 35-43 (YVPTVFENY) carry the Effector region motif. GTP-binding positions include 60–64 (DTAGQ) and 118–121 (CKAD). Cysteine 199 bears the Cysteine methyl ester mark. A lipid anchor (S-geranylgeranyl cysteine) is attached at cysteine 199. The propeptide at 200-202 (ILL) is removed in mature form.

It belongs to the small GTPase superfamily. Rho family.

The protein localises to the cell membrane. Involved in the regulation of cell wall growth and actin cytoskeleton organization. Activates (1,3)-beta-D-glucan synthase. The protein is GTP-binding protein rho1 (rho1) of Schizosaccharomyces pombe (strain 972 / ATCC 24843) (Fission yeast).